The chain runs to 239 residues: Ribosomal RNA small subunit methyltransferase G (239 aa).

S-adenosyl-L-methionine-binding positions include glycine 79, phenylalanine 84, 130-131 (AE), and arginine 149.

This sequence belongs to the methyltransferase superfamily. RNA methyltransferase RsmG family.

Its subcellular location is the cytoplasm. Functionally, specifically methylates the N7 position of a guanine in 16S rRNA. This Pelotomaculum thermopropionicum (strain DSM 13744 / JCM 10971 / SI) protein is Ribosomal RNA small subunit methyltransferase G.